A 141-amino-acid chain; its full sequence is MDSDDNRTLSYEVVDHESDIGVIVYGKTYEELFSNAVYAMADLIVDVSRLKENRKMHEVITGKTPEDIMVNLLSRVLFYLDTYYILYYRITSKYSDGELDAYFYGSEIPEGIEYRNVIKAVTYSDLAVKPEEGYAKIIFDL.

2 residues coordinate Ca(2+): aspartate 19 and aspartate 140.

This sequence belongs to the archease family.

Activates the tRNA-splicing ligase complex by facilitating the enzymatic turnover of catalytic subunit RtcB. Acts by promoting the guanylylation of RtcB, a key intermediate step in tRNA ligation. Can also alter the NTP specificity of RtcB such that ATP, dGTP or ITP is used efficiently. The chain is Protein archease from Thermoplasma acidophilum (strain ATCC 25905 / DSM 1728 / JCM 9062 / NBRC 15155 / AMRC-C165).